The following is a 358-amino-acid chain: MTAAAAQIDMSALAHNLQKIKQQAPNSKLLAVVKANGYGHGLLNIAKGAHGVDAFGVARIEEALQLRAGGIVKQVLLLEGFYSAGDLPILVANNIQTAVHCKEQLEALENADLEGPVVVWLKVDSGMHRLGIRPEEYQEYVDRLHACKNVAQPLRYMSHFGCADELDNPTTNEQIETFMSLTDGCQGERSLAASAGLLAWPDSQLDWVRPGIIMYGVSPFSEKTAQDLGYLPTMTLTSHLIAVREVKAGESVGYGAMWTSERDTKIGVIAIGYGDGYPIAAPNGTPVLVNGRKVPVAGRVSMDMLTVDLGPDAEDNVGDEAILWGRDLPAEEVAEHIGTIAYELVTKLTSRVQMQYIP.

The active-site Proton acceptor; specific for D-alanine is lysine 34. Position 34 is an N6-(pyridoxal phosphate)lysine (lysine 34). Position 129 (arginine 129) interacts with substrate. The active-site Proton acceptor; specific for L-alanine is the tyrosine 254. Methionine 302 provides a ligand contact to substrate.

Belongs to the alanine racemase family. Pyridoxal 5'-phosphate is required as a cofactor.

The enzyme catalyses L-alanine = D-alanine. The protein operates within amino-acid biosynthesis; D-alanine biosynthesis; D-alanine from L-alanine: step 1/1. Catalyzes the interconversion of L-alanine and D-alanine. May also act on other amino acids. This is Alanine racemase (alr) from Aliivibrio salmonicida (strain LFI1238) (Vibrio salmonicida (strain LFI1238)).